An 842-amino-acid polypeptide reads, in one-letter code: Pentatricopeptide repeat-containing protein At3g22690 (842 aa).

PPR repeat units lie at residues 98–132 (TCFMYNSLIRGYASSGLCNEAILLFLRMMNSGISP), 133–167 (DKYTFPFGLSACAKSRAKGNGIQIHGLIVKMGYAK), 168–202 (DLFVQNSLVHFYAECGELDSARKVFDEMSERNVVS), 203–234 (WTSMICGYARRDFAKDAVDLFFRMVRDEEVTP), 235–269 (NSVTMVCVISACAKLEDLETGEKVYAFIRNSGIEV), 270–300 (NDLMVSALVDMYMKCNAIDVAKRLFDEYGAS), 301–335 (NLDLCNAMASNYVRQGLTREALGVFNLMMDSGVRP), 336–370 (DRISMLSAISSCSQLRNILWGKSCHGYVLRNGFES), 371–401 (WDNICNALIDMYMKCHRQDTAFRIFDRMSNK), 402–436 (TVVTWNSIVAGYVENGEVDAAWETFETMPEKNIVS), 437–463 (WNTIISGLVQGSLFEEAIEVFCSMQSQ), 469–503 (DGVTMMSIASACGHLGALDLAKWIYYYIEKNGIQL), 504–534 (DVRLGTTLVDMFSRCGDPESAMSIFNSLTNR), 535–569 (DVSAWTAAIGAMAMAGNAERAIELFDDMIEQGLKP), 570–605 (DGVAFVGALTACSHGGLVQQGKEIFYSMLKLHGVSP), and 606–636 (EDVHYGCMVDLLGRAGLLEEAVQLIEDMPME). The type E motif stretch occupies residues 641 to 716 (IWNSLLAACR…PPGTSSIQIR (76 aa)). Residues 717–747 (GKTHEFTSGDESHPEMPNIEAMLDEVSQRAS) are type E(+) motif. A type DYW motif region spans residues 748–842 (HLGHVPDLSN…QGKCSCGDFW (95 aa)).

It belongs to the PPR family. PCMP-H subfamily.

The protein is Pentatricopeptide repeat-containing protein At3g22690 (PCMP-H56) of Arabidopsis thaliana (Mouse-ear cress).